The sequence spans 864 residues: Protein translocase subunit SecA (864 aa).

ATP is bound by residues glutamine 85, 103–107 (GEGKT), and aspartate 542.

This sequence belongs to the SecA family. As to quaternary structure, monomer and homodimer. Part of the essential Sec protein translocation apparatus which comprises SecA, SecYEG and auxiliary proteins SecDF. Other proteins may also be involved.

The protein localises to the cell inner membrane. The protein resides in the cytoplasm. It carries out the reaction ATP + H2O + cellular proteinSide 1 = ADP + phosphate + cellular proteinSide 2.. Its function is as follows. Part of the Sec protein translocase complex. Interacts with the SecYEG preprotein conducting channel. Has a central role in coupling the hydrolysis of ATP to the transfer of proteins into and across the cell membrane, serving as an ATP-driven molecular motor driving the stepwise translocation of polypeptide chains across the membrane. This chain is Protein translocase subunit SecA, found in Fervidobacterium nodosum (strain ATCC 35602 / DSM 5306 / Rt17-B1).